Here is a 71-residue protein sequence, read N- to C-terminus: DNA gyrase inhibitor YacG (71 aa).

Zn(2+)-binding residues include Cys-9, Cys-12, Cys-28, and Cys-32. Positions 43–71 are disordered; that stretch reads EEKRIPSQSESNDSDEWSEMPEQDPKPFN. Acidic residues predominate over residues 54–64; that stretch reads NDSDEWSEMPE.

The protein belongs to the DNA gyrase inhibitor YacG family. Interacts with GyrB. Requires Zn(2+) as cofactor.

In terms of biological role, inhibits all the catalytic activities of DNA gyrase by preventing its interaction with DNA. Acts by binding directly to the C-terminal domain of GyrB, which probably disrupts DNA binding by the gyrase. In Proteus mirabilis (strain HI4320), this protein is DNA gyrase inhibitor YacG.